Here is a 399-residue protein sequence, read N- to C-terminus: Flavohemoprotein (399 aa).

Residues 1 to 138 enclose the Globin domain; sequence MLAEKTRSII…IADIFITVEK (138 aa). Thr22 is subject to Phosphothreonine. His85 contacts heme b. Residues Tyr95 and Glu137 each act as charge relay system in the active site. Residues 146 to 399 are reductase; the sequence is WPGWKPFDIT…FGPKMSTVQV (254 aa). Residues 147–264 enclose the FAD-binding FR-type domain; sequence PGWKPFDITA…SAPAGDFAIN (118 aa). FAD contacts are provided by residues Tyr189 and 207–210; that span reads RHYS. 281 to 286 contributes to the NADP(+) binding site; that stretch reads GVGVTP. Residue 389–392 participates in FAD binding; it reads PFGP.

It belongs to the globin family. Two-domain flavohemoproteins subfamily. In the C-terminal section; belongs to the flavoprotein pyridine nucleotide cytochrome reductase family. It depends on FAD as a cofactor. Heme b is required as a cofactor.

The protein resides in the cytoplasm. The catalysed reaction is 2 nitric oxide + NADPH + 2 O2 = 2 nitrate + NADP(+) + H(+). It catalyses the reaction 2 nitric oxide + NADH + 2 O2 = 2 nitrate + NAD(+) + H(+). In terms of biological role, is involved in NO detoxification in an aerobic process, termed nitric oxide dioxygenase (NOD) reaction that utilizes O(2) and NAD(P)H to convert NO to nitrate, which protects the fungus from various noxious nitrogen compounds. Therefore, plays a central role in the inducible response to nitrosative stress. In the presence of oxygen and NADH, it has NADH oxidase activity, which leads to the generation of superoxide and H(2)O(2). Under anaerobic conditions, it also exhibits nitric oxide reductase and FAD reductase activities. However, all these reactions are much lower than NOD activity. The sequence is that of Flavohemoprotein (YHB1) from Saccharomyces cerevisiae (strain ATCC 204508 / S288c) (Baker's yeast).